The following is a 523-amino-acid chain: Sialate O-acetylesterase (523 aa).

The N-terminal stretch at methionine 1 to glycine 23 is a signal peptide. N-linked (GlcNAc...) asparagine glycans are attached at residues asparagine 107, asparagine 138, asparagine 267, asparagine 290, asparagine 401, and asparagine 422.

Widely expressed with high expression in the testis, prostate, and colon.

It is found in the lysosome. The protein resides in the cytoplasm. The enzyme catalyses N-acetyl-9-O-acetylneuraminate + H2O = N-acetylneuraminate + acetate + H(+). The catalysed reaction is an Ac-O-9-sialoglycoconjugate + H2O = a sialoglycoconjugate + acetate + H(+). Its function is as follows. Catalyzes the removal of O-acetyl ester groups from position 9 of the free diacetylated sialate N-acetyl-9-O-acetylneuraminate (Neu5,9Ac2) in the cytosol and of the diacetylated sialate residues of sialylglycoconjugates in the lysosomes. Together with the sialate-O-acetyltransferase they regulate the balance of acetylated sialoglycoconjugates, key players in various processes such as cell-cell interactions, host-pathogen recognition, and tumor antigenicity. This chain is Sialate O-acetylesterase (SIAE), found in Homo sapiens (Human).